Here is an 85-residue protein sequence, read N- to C-terminus: MATKKAGGSTRNGRDSEAKRLGVKRFGGESVLAGSIIVRQRGTKFHAGNNVGMGKDHTLFATADGKVKFEVKGEKNRKYVSIVAE.

The interval 1–20 is disordered; the sequence is MATKKAGGSTRNGRDSEAKR.

The protein belongs to the bacterial ribosomal protein bL27 family.

This Actinobacillus pleuropneumoniae serotype 5b (strain L20) protein is Large ribosomal subunit protein bL27.